Reading from the N-terminus, the 234-residue chain is NLP effector protein 10 (234 aa).

An N-terminal signal peptide occupies residues 1–17 (MFKTFIIAAVAVATVRA). Residue Asn65 is glycosylated (N-linked (GlcNAc...) asparagine). The Conserved undecapeptide motif I motif lies at 101–111 (AIMYSWYFPKD). Positions 118–124 (GHRHDWE) match the Hepta-peptide GHRHDWE motif II motif.

Belongs to the Necrosis inducing protein (NPP1) family.

It is found in the secreted. Its function is as follows. Secreted effector that contributes moderately to virulence during infection by P.capsici. Does not cause visible reaction of C.annuum for several days after inoculation, but by 7 days after inoculation, small necrotic lesions become visible. Leads only to chlorotic areas, without necrosis at 7 days after non-host N.benthamiana leaves infection. In Phytophthora capsici, this protein is NLP effector protein 10.